The sequence spans 318 residues: Ribosomal RNA small subunit methyltransferase H (318 aa).

S-adenosyl-L-methionine is bound by residues 35-37 (AGH), Asp-55, Phe-84, Asp-105, and Gln-112. The tract at residues 294–318 (SDSELSENNRSRSAKLRIAEKIKSR) is disordered.

It belongs to the methyltransferase superfamily. RsmH family.

The protein localises to the cytoplasm. It catalyses the reaction cytidine(1402) in 16S rRNA + S-adenosyl-L-methionine = N(4)-methylcytidine(1402) in 16S rRNA + S-adenosyl-L-homocysteine + H(+). Functionally, specifically methylates the N4 position of cytidine in position 1402 (C1402) of 16S rRNA. In Enterococcus faecalis (strain ATCC 700802 / V583), this protein is Ribosomal RNA small subunit methyltransferase H.